We begin with the raw amino-acid sequence, 434 residues long: Trigger factor (434 aa).

Residues 160–245 form the PPIase FKBP-type domain; it reads GDKVKMNFVG…LTEVQAANLP (86 aa).

The protein belongs to the FKBP-type PPIase family. Tig subfamily.

It localises to the cytoplasm. The catalysed reaction is [protein]-peptidylproline (omega=180) = [protein]-peptidylproline (omega=0). In terms of biological role, involved in protein export. Acts as a chaperone by maintaining the newly synthesized protein in an open conformation. Functions as a peptidyl-prolyl cis-trans isomerase. This Shewanella sp. (strain W3-18-1) protein is Trigger factor.